We begin with the raw amino-acid sequence, 113 residues long: T cell receptor alpha variable 8-3 (113 aa).

The first 20 residues, 1–20 (MLLELIPLLGIHFVLRTARA), serve as a signal peptide directing secretion. Residues 21-113 (QSVTQPDIHI…DAAEYFCAVG (93 aa)) form the Ig-like domain. A disulfide bridge links cysteine 42 with cysteine 110. Asparagine 43 carries an N-linked (GlcNAc...) asparagine glycan.

As to quaternary structure, alpha-beta TR is a heterodimer composed of an alpha and beta chain; disulfide-linked. The alpha-beta TR is associated with the transmembrane signaling CD3 coreceptor proteins to form the TR-CD3 (TcR or TCR). The assembly of alpha-beta TR heterodimers with CD3 occurs in the endoplasmic reticulum where a single alpha-beta TR heterodimer associates with one CD3D-CD3E heterodimer, one CD3G-CD3E heterodimer and one CD247 homodimer forming a stable octameric structure. CD3D-CD3E and CD3G-CD3E heterodimers preferentially associate with TR alpha and TR beta chains, respectively. The association of the CD247 homodimer is the last step of TcR assembly in the endoplasmic reticulum and is required for transport to the cell surface.

It is found in the cell membrane. Functionally, v region of the variable domain of T cell receptor (TR) alpha chain that participates in the antigen recognition. Alpha-beta T cell receptors are antigen specific receptors which are essential to the immune response and are present on the cell surface of T lymphocytes. Recognize peptide-major histocompatibility (MH) (pMH) complexes that are displayed by antigen presenting cells (APC), a prerequisite for efficient T cell adaptive immunity against pathogens. Binding of alpha-beta TR to pMH complex initiates TR-CD3 clustering on the cell surface and intracellular activation of LCK that phosphorylates the ITAM motifs of CD3G, CD3D, CD3E and CD247 enabling the recruitment of ZAP70. In turn ZAP70 phosphorylates LAT, which recruits numerous signaling molecules to form the LAT signalosome. The LAT signalosome propagates signal branching to three major signaling pathways, the calcium, the mitogen-activated protein kinase (MAPK) kinase and the nuclear factor NF-kappa-B (NF-kB) pathways, leading to the mobilization of transcription factors that are critical for gene expression and essential for T cell growth and differentiation. The T cell repertoire is generated in the thymus, by V-(D)-J rearrangement. This repertoire is then shaped by intrathymic selection events to generate a peripheral T cell pool of self-MH restricted, non-autoaggressive T cells. Post-thymic interaction of alpha-beta TR with the pMH complexes shapes TR structural and functional avidity. This Homo sapiens (Human) protein is T cell receptor alpha variable 8-3.